The chain runs to 289 residues: Lipoyl synthase (289 aa).

Residues cysteine 33, cysteine 38, cysteine 44, cysteine 59, cysteine 63, cysteine 66, and serine 274 each contribute to the [4Fe-4S] cluster site. The 219-residue stretch at 45 to 263 (FAGGTATFLI…SQGESELGFL (219 aa)) folds into the Radical SAM core domain.

It belongs to the radical SAM superfamily. Lipoyl synthase family. [4Fe-4S] cluster serves as cofactor.

The protein resides in the cytoplasm. The enzyme catalyses [[Fe-S] cluster scaffold protein carrying a second [4Fe-4S](2+) cluster] + N(6)-octanoyl-L-lysyl-[protein] + 2 oxidized [2Fe-2S]-[ferredoxin] + 2 S-adenosyl-L-methionine + 4 H(+) = [[Fe-S] cluster scaffold protein] + N(6)-[(R)-dihydrolipoyl]-L-lysyl-[protein] + 4 Fe(3+) + 2 hydrogen sulfide + 2 5'-deoxyadenosine + 2 L-methionine + 2 reduced [2Fe-2S]-[ferredoxin]. It participates in protein modification; protein lipoylation via endogenous pathway; protein N(6)-(lipoyl)lysine from octanoyl-[acyl-carrier-protein]: step 2/2. Functionally, catalyzes the radical-mediated insertion of two sulfur atoms into the C-6 and C-8 positions of the octanoyl moiety bound to the lipoyl domains of lipoate-dependent enzymes, thereby converting the octanoylated domains into lipoylated derivatives. This is Lipoyl synthase from Synechococcus sp. (strain RCC307).